We begin with the raw amino-acid sequence, 169 residues long: Peptide deformylase (169 aa).

The Fe cation site is built by Cys-91 and His-133. Residue Glu-134 is part of the active site. His-137 is a binding site for Fe cation.

The protein belongs to the polypeptide deformylase family. Fe(2+) is required as a cofactor.

The enzyme catalyses N-terminal N-formyl-L-methionyl-[peptide] + H2O = N-terminal L-methionyl-[peptide] + formate. Functionally, removes the formyl group from the N-terminal Met of newly synthesized proteins. Requires at least a dipeptide for an efficient rate of reaction. N-terminal L-methionine is a prerequisite for activity but the enzyme has broad specificity at other positions. The chain is Peptide deformylase from Salmonella agona (strain SL483).